We begin with the raw amino-acid sequence, 158 residues long: Large ribosomal subunit protein uL16 (158 aa).

The disordered stretch occupies residues 1–22; that stretch reads MLSPKRTKYRKQQRGRMKGKAT.

Belongs to the universal ribosomal protein uL16 family. As to quaternary structure, part of the 50S ribosomal subunit.

In terms of biological role, binds 23S rRNA and is also seen to make contacts with the A and possibly P site tRNAs. The polypeptide is Large ribosomal subunit protein uL16 (Synechococcus sp. (strain JA-3-3Ab) (Cyanobacteria bacterium Yellowstone A-Prime)).